The following is a 403-amino-acid chain: Decapping and exoribonuclease protein 1 (403 aa).

An a divalent metal cation-binding site is contributed by Glu-223. Glu-260 is a substrate binding site. 3 residues coordinate a divalent metal cation: Asp-262, Glu-273, and Ile-274. Substrate contacts are provided by Lys-275 and Gln-297.

Belongs to the DXO/Dom3Z family. Requires a divalent metal cation as cofactor.

It is found in the cytoplasm. The enzyme catalyses a 5'-end NAD(+)-phospho-ribonucleoside in mRNA + H2O = a 5'-end phospho-ribonucleoside in mRNA + NAD(+) + H(+). It carries out the reaction a 5'-end (N(7)-methyl 5'-triphosphoguanosine)-ribonucleoside-ribonucleotide in mRNA + H2O = a (N(7)-methyl 5'-triphosphoguanosine)-nucleoside + a 5'-end phospho-ribonucleoside in mRNA + H(+). Decapping enzyme for NAD-capped RNAs: specifically hydrolyzes the nicotinamide adenine dinucleotide (NAD) cap from a subset of RNAs by removing the entire NAD moiety from the 5'-end of an NAD-capped RNA. The NAD-cap is present at the 5'-end of some RNAs and snoRNAs. In contrast to the canonical 5'-end N7 methylguanosine (m7G) cap, the NAD cap promotes mRNA decay. Also acts as a non-canonical decapping enzyme that removes the entire cap structure of m7G capped or incompletely capped RNAs and mediates their subsequent degradation. Has decapping and 5'-3' exonuclease activities. Has decapping activity toward incomplete 5'-end cap mRNAs such as unmethylated 5'-end-capped RNA to release GpppN and 5'-end monophosphate RNA. The 5'-end monophosphate RNA is then degraded by the 5'-3' exoribonuclease activity, enabling this enzyme to decap and degrade incompletely capped mRNAs. This is Decapping and exoribonuclease protein 1 from Kluyveromyces lactis (strain ATCC 8585 / CBS 2359 / DSM 70799 / NBRC 1267 / NRRL Y-1140 / WM37) (Yeast).